A 653-amino-acid polypeptide reads, in one-letter code: 4-alpha-glucanotransferase (653 aa).

Catalysis depends on E123, which acts as the Nucleophile. The Proton donor role is filled by D214.

Belongs to the glycosyl hydrolase 57 family.

The enzyme catalyses Transfers a segment of a (1-&gt;4)-alpha-D-glucan to a new position in an acceptor, which may be glucose or a (1-&gt;4)-alpha-D-glucan.. This Thermococcus kodakarensis (strain ATCC BAA-918 / JCM 12380 / KOD1) (Pyrococcus kodakaraensis (strain KOD1)) protein is 4-alpha-glucanotransferase.